Consider the following 87-residue polypeptide: Putative regulatory protein BH2513 (87 aa).

Belongs to the RemA family.

This chain is Putative regulatory protein BH2513, found in Halalkalibacterium halodurans (strain ATCC BAA-125 / DSM 18197 / FERM 7344 / JCM 9153 / C-125) (Bacillus halodurans).